Consider the following 101-residue polypeptide: Small ribosomal subunit protein uS10 (101 aa).

The protein belongs to the universal ribosomal protein uS10 family. Part of the 30S ribosomal subunit.

In terms of biological role, involved in the binding of tRNA to the ribosomes. In Porphyromonas gingivalis (strain ATCC 33277 / DSM 20709 / CIP 103683 / JCM 12257 / NCTC 11834 / 2561), this protein is Small ribosomal subunit protein uS10.